The following is a 340-amino-acid chain: Fructose-1,6-bisphosphatase, cytosolic (340 aa).

E71, E100, D121, L123, and D124 together coordinate Mg(2+). Substrate-binding positions include 124–127 (DGSS), N215, Y247, Y267, and K277. A Mg(2+)-binding site is contributed by E283.

The protein belongs to the FBPase class 1 family. Mg(2+) serves as cofactor.

It localises to the cytoplasm. The enzyme catalyses beta-D-fructose 1,6-bisphosphate + H2O = beta-D-fructose 6-phosphate + phosphate. The sequence is that of Fructose-1,6-bisphosphatase, cytosolic from Solanum tuberosum (Potato).